The following is a 347-amino-acid chain: Protein RecA (347 aa).

68–75 (GPESSGKT) provides a ligand contact to ATP.

Belongs to the RecA family.

Its subcellular location is the cytoplasm. Can catalyze the hydrolysis of ATP in the presence of single-stranded DNA, the ATP-dependent uptake of single-stranded DNA by duplex DNA, and the ATP-dependent hybridization of homologous single-stranded DNAs. It interacts with LexA causing its activation and leading to its autocatalytic cleavage. This is Protein RecA from Nocardia farcinica (strain IFM 10152).